We begin with the raw amino-acid sequence, 146 residues long: Cytochrome c-type biogenesis protein CcmE (146 aa).

Over 1–8 the chain is Cytoplasmic; sequence MHPKRKKR. A helical; Signal-anchor for type II membrane protein membrane pass occupies residues 9-29; that stretch reads LLIVLAGLAVVAVASGLILNA. The Periplasmic portion of the chain corresponds to 30-146; the sequence is FRSNLVFFHT…IQRAGETVVQ (117 aa). H124 and Y128 together coordinate heme.

Belongs to the CcmE/CycJ family.

The protein resides in the cell inner membrane. Its function is as follows. Heme chaperone required for the biogenesis of c-type cytochromes. Transiently binds heme delivered by CcmC and transfers the heme to apo-cytochromes in a process facilitated by CcmF and CcmH. This chain is Cytochrome c-type biogenesis protein CcmE, found in Laribacter hongkongensis (strain HLHK9).